Consider the following 199-residue polypeptide: Ras-related protein Rab-7b (199 aa).

GTP-binding positions include 15 to 22 (GALGVGKT), 34 to 40 (FEEYQTT), 63 to 67 (DTGGQ), 124 to 127 (NKID), and 154 to 155 (AK). 2 short sequence motifs (switch) span residues 28-41 (YVHK…QTTL) and 67-82 (QERF…KGSD). S186 is modified (phosphoserine). S-geranylgeranyl cysteine attachment occurs at residues C198 and C199.

Belongs to the small GTPase superfamily. Rab family.

The protein resides in the late endosome. Its subcellular location is the lysosome. The protein localises to the golgi apparatus. It is found in the trans-Golgi network. It localises to the cytoplasmic vesicle. The protein resides in the phagosome. Its subcellular location is the phagosome membrane. In terms of biological role, controls vesicular trafficking from endosomes to the trans-Golgi network (TGN). Acts as a negative regulator of TLR9 signaling and can suppress TLR9-triggered TNFA, IL6, and IFNB production in macrophages by promoting TLR9 lysosomal degradation. Also negatively regulates TLR4 signaling in macrophages by promoting lysosomal degradation of TLR4. Promotes megakaryocytic differentiation by increasing NF-kappa-B-dependent IL6 production and subsequently enhancing the association of STAT3 with GATA1. Not involved in the regulation of the EGF- and EGFR degradation pathway. The polypeptide is Ras-related protein Rab-7b (Rab7b) (Mus musculus (Mouse)).